The primary structure comprises 185 residues: Threonylcarbamoyl-AMP synthase (185 aa).

Positions 4–185 (SWRVQQAARE…LATGEVVRPG (182 aa)) constitute a YrdC-like domain.

It belongs to the SUA5 family. TsaC subfamily.

The protein resides in the cytoplasm. It catalyses the reaction L-threonine + hydrogencarbonate + ATP = L-threonylcarbamoyladenylate + diphosphate + H2O. Functionally, required for the formation of a threonylcarbamoyl group on adenosine at position 37 (t(6)A37) in tRNAs that read codons beginning with adenine. Catalyzes the conversion of L-threonine, HCO(3)(-)/CO(2) and ATP to give threonylcarbamoyl-AMP (TC-AMP) as the acyladenylate intermediate, with the release of diphosphate. The chain is Threonylcarbamoyl-AMP synthase from Pseudomonas entomophila (strain L48).